Consider the following 117-residue polypeptide: Large ribosomal subunit protein bL19 (117 aa).

Belongs to the bacterial ribosomal protein bL19 family.

Functionally, this protein is located at the 30S-50S ribosomal subunit interface and may play a role in the structure and function of the aminoacyl-tRNA binding site. The polypeptide is Large ribosomal subunit protein bL19 (Rhodopirellula baltica (strain DSM 10527 / NCIMB 13988 / SH1)).